A 207-amino-acid chain; its full sequence is Small ribosomal subunit protein uS4 (207 aa).

A disordered region spans residues 35-54; it reads RPKPPGPQLGRPRRLSDRGQ. In terms of domain architecture, S4 RNA-binding spans 97–163; that stretch reads RRLDNVLFRL…AYFKTLAENI (67 aa).

This sequence belongs to the universal ribosomal protein uS4 family. As to quaternary structure, part of the 30S ribosomal subunit. Contacts protein S5. The interaction surface between S4 and S5 is involved in control of translational fidelity.

Functionally, one of the primary rRNA binding proteins, it binds directly to 16S rRNA where it nucleates assembly of the body of the 30S subunit. In terms of biological role, with S5 and S12 plays an important role in translational accuracy. The sequence is that of Small ribosomal subunit protein uS4 from Dehalococcoides mccartyi (strain CBDB1).